A 185-amino-acid chain; its full sequence is Thymidine kinase (185 aa).

ATP contacts are provided by residues 7–14 (GPMFAGKT) and 83–86 (DEIQ). The active-site Proton acceptor is the Glu84. The Zn(2+) site is built by Cys139, Cys142, Cys177, and His180.

Belongs to the thymidine kinase family. In terms of assembly, homotetramer.

It is found in the cytoplasm. The catalysed reaction is thymidine + ATP = dTMP + ADP + H(+). The polypeptide is Thymidine kinase (Pyrobaculum aerophilum (strain ATCC 51768 / DSM 7523 / JCM 9630 / CIP 104966 / NBRC 100827 / IM2)).